We begin with the raw amino-acid sequence, 367 residues long: Zinc transport system membrane protein TroD (367 aa).

Transmembrane regions (helical) follow at residues Val5–Leu25, Ile28–Phe48, Phe56–Leu76, Ala87–Ala107, Ser140–Lys160, Val170–Val190, Val201–Thr221, Leu224–Phe244, and Gly251–Phe271.

The protein belongs to the ABC-3 integral membrane protein family.

The protein resides in the cell membrane. Its function is as follows. Part of an ATP-driven transport system TroABCD for zinc. The protein is Zinc transport system membrane protein TroD (troD) of Treponema pallidum (strain Nichols).